Here is a 401-residue protein sequence, read N- to C-terminus: Formate-dependent phosphoribosylglycinamide formyltransferase (401 aa).

N(1)-(5-phospho-beta-D-ribosyl)glycinamide-binding positions include 22 to 23 (EL) and E82. Residues R115, K157, 162 to 167 (SSGKGQ), 197 to 200 (EGFI), and E205 each bind ATP. The ATP-grasp domain occupies 120–315 (RLAAETLGLP…EFELHARAIL (196 aa)). Mg(2+) contacts are provided by E274 and E286. Residues D293, K362, and 369 to 370 (RR) contribute to the N(1)-(5-phospho-beta-D-ribosyl)glycinamide site.

The protein belongs to the PurK/PurT family. As to quaternary structure, homodimer.

It carries out the reaction N(1)-(5-phospho-beta-D-ribosyl)glycinamide + formate + ATP = N(2)-formyl-N(1)-(5-phospho-beta-D-ribosyl)glycinamide + ADP + phosphate + H(+). The protein operates within purine metabolism; IMP biosynthesis via de novo pathway; N(2)-formyl-N(1)-(5-phospho-D-ribosyl)glycinamide from N(1)-(5-phospho-D-ribosyl)glycinamide (formate route): step 1/1. In terms of biological role, involved in the de novo purine biosynthesis. Catalyzes the transfer of formate to 5-phospho-ribosyl-glycinamide (GAR), producing 5-phospho-ribosyl-N-formylglycinamide (FGAR). Formate is provided by PurU via hydrolysis of 10-formyl-tetrahydrofolate. This chain is Formate-dependent phosphoribosylglycinamide formyltransferase, found in Cupriavidus pinatubonensis (strain JMP 134 / LMG 1197) (Cupriavidus necator (strain JMP 134)).